The chain runs to 512 residues: MTQFITHKWLAALGLASSIAAFPALAAKDVVVAVGSNFTTLDPYDANDTLSQAVAKSFYQGLFGLDKDMKVKNVLAEGYTVSDDGLTYTITLRQGVKFQDGADFDAAAVKANLDRASNPDNHLKRYNLYKNIAKTEVVDPVTVKITLKQPFSAFINILAHPATAMISPQALEKYGKDIGFHPVGTGPYQLETWNQTDFVKVKKFSGYWQQGLPKLDSITWRPVTDNNTRAAMLQTGEAQFAFPIPYEQAALLAKNKNLELVASPSIMQRYISMNVTQKPFDNPKVREALNYAINRQALVKVAFAGYATPATGVVPPSIAYAQSYQPWPYDPAKARELLKEAGYPDGFSTTLWSSHNHSTAQKVLQFTQQQLAQIGIKARITAMDAGQRAAEVEGKGQKESGVRMFYTGWSASTGEADWALSPLFASQNWPPTQFNTALYSNKQVDSDLAAALKTNDPQEKTRLYKEAQDIIWKESPWIPLVVEKLVSAHSKNLTGFWIMPDTGFSFDDADLK.

Residues 1-26 form the signal peptide; sequence MTQFITHKWLAALGLASSIAAFPALA.

The protein belongs to the bacterial solute-binding protein 5 family. As to quaternary structure, the complex is composed of two ATP-binding proteins (GsiA), two transmembrane proteins (GsiC and GsiD) and a solute-binding protein (GsiB).

The protein resides in the periplasm. In terms of biological role, part of the ABC transporter complex GsiABCD involved in glutathione import. Binds glutathione. This is Glutathione-binding protein GsiB from Salmonella paratyphi A (strain ATCC 9150 / SARB42).